Here is a 327-residue protein sequence, read N- to C-terminus: Biotin synthase (327 aa).

A Radical SAM core domain is found at 49–273 (FNKDKIDLCS…ICIARIALPD (225 aa)). Residues Cys67, Cys71, and Cys74 each coordinate [4Fe-4S] cluster. Residues Ser110, Cys142, Cys201, and Arg277 each coordinate [2Fe-2S] cluster.

It belongs to the radical SAM superfamily. Biotin synthase family. Homodimer. It depends on [4Fe-4S] cluster as a cofactor. The cofactor is [2Fe-2S] cluster.

It catalyses the reaction (4R,5S)-dethiobiotin + (sulfur carrier)-SH + 2 reduced [2Fe-2S]-[ferredoxin] + 2 S-adenosyl-L-methionine = (sulfur carrier)-H + biotin + 2 5'-deoxyadenosine + 2 L-methionine + 2 oxidized [2Fe-2S]-[ferredoxin]. Its pathway is cofactor biosynthesis; biotin biosynthesis; biotin from 7,8-diaminononanoate: step 2/2. Catalyzes the conversion of dethiobiotin (DTB) to biotin by the insertion of a sulfur atom into dethiobiotin via a radical-based mechanism. This chain is Biotin synthase, found in Methanococcus maripaludis (strain C6 / ATCC BAA-1332).